We begin with the raw amino-acid sequence, 277 residues long: Cis-2,3-dihydrobiphenyl-2,3-diol dehydrogenase (277 aa).

9 to 33 (LITGGASGLGRALVDRFVAERAKVA) lines the NAD(+) pocket. Ser142 contacts substrate. Residue Tyr155 is the Proton acceptor of the active site.

The protein belongs to the short-chain dehydrogenases/reductases (SDR) family. In terms of assembly, homotetramer.

It catalyses the reaction (2R,3S)-3-phenylcyclohexa-3,5-diene-1,2-diol + NAD(+) = biphenyl-2,3-diol + NADH + H(+). The protein operates within xenobiotic degradation; biphenyl degradation; 2-hydroxy-2,4-pentadienoate and benzoate from biphenyl: step 2/4. The polypeptide is Cis-2,3-dihydrobiphenyl-2,3-diol dehydrogenase (bphB) (Pseudomonas putida (Arthrobacter siderocapsulatus)).